A 347-amino-acid polypeptide reads, in one-letter code: Phenylalanine--tRNA ligase alpha subunit (347 aa).

Residues 83–111 (QNLSGGDDSGADPTFDPTLPGTRPSLGHI) are disordered. Residue E274 coordinates Mg(2+).

Belongs to the class-II aminoacyl-tRNA synthetase family. Phe-tRNA synthetase alpha subunit type 1 subfamily. As to quaternary structure, tetramer of two alpha and two beta subunits. It depends on Mg(2+) as a cofactor.

Its subcellular location is the cytoplasm. It carries out the reaction tRNA(Phe) + L-phenylalanine + ATP = L-phenylalanyl-tRNA(Phe) + AMP + diphosphate + H(+). The chain is Phenylalanine--tRNA ligase alpha subunit from Rhodopirellula baltica (strain DSM 10527 / NCIMB 13988 / SH1).